Here is a 263-residue protein sequence, read N- to C-terminus: Triosephosphate isomerase (263 aa).

10–12 lines the substrate pocket; sequence NWK. His104 functions as the Electrophile in the catalytic mechanism. Glu176 acts as the Proton acceptor in catalysis. Substrate is bound by residues Gly182, Ser221, and 242 to 243; that span reads GG.

This sequence belongs to the triosephosphate isomerase family. Homodimer.

The protein resides in the cytoplasm. The catalysed reaction is D-glyceraldehyde 3-phosphate = dihydroxyacetone phosphate. The protein operates within carbohydrate biosynthesis; gluconeogenesis. It participates in carbohydrate degradation; glycolysis; D-glyceraldehyde 3-phosphate from glycerone phosphate: step 1/1. Involved in the gluconeogenesis. Catalyzes stereospecifically the conversion of dihydroxyacetone phosphate (DHAP) to D-glyceraldehyde-3-phosphate (G3P). This chain is Triosephosphate isomerase, found in Haemophilus influenzae (strain 86-028NP).